A 290-amino-acid chain; its full sequence is N-acetylmannosamine kinase (290 aa).

ATP contacts are provided by residues 6-13 (ALDIGGTK) and 132-139 (GVGGGIIL). Zn(2+)-binding residues include His-156, Cys-166, Cys-168, and Cys-173.

The protein belongs to the ROK (NagC/XylR) family. NanK subfamily. As to quaternary structure, homodimer.

It catalyses the reaction an N-acyl-D-mannosamine + ATP = an N-acyl-D-mannosamine 6-phosphate + ADP + H(+). The protein operates within amino-sugar metabolism; N-acetylneuraminate degradation; D-fructose 6-phosphate from N-acetylneuraminate: step 2/5. Its function is as follows. Catalyzes the phosphorylation of N-acetylmannosamine (ManNAc) to ManNAc-6-P. The chain is N-acetylmannosamine kinase from Yersinia pestis (strain Pestoides F).